The chain runs to 295 residues: Ventral anterior homeobox 1a (295 aa).

Residues 20–33 are compositionally biased toward basic and acidic residues; it reads ISKPKDNKEIRETQ. The disordered stretch occupies residues 20-63; it reads ISKPKDNKEIRETQAKMPSTYLKEQPGTYPAPGSSELCAKNKSS. Residues 97 to 156 constitute a DNA-binding region (homeobox); sequence PKRSRTSFTAEQLYRLEMEFQRCQYVVGRERTDLSRQLNLSETQVKVWFQNRRTKQKKDQ. The tract at residues 203–226 is disordered; that stretch reads RAPNSSGPGTRSLATVTSTPPHQP. Positions 204–222 are enriched in polar residues; it reads APNSSGPGTRSLATVTSTP.

It belongs to the EMX homeobox family.

The protein localises to the nucleus. Functionally, may play a role in the specification and maintenance of basal forebrain identity. The protein is Ventral anterior homeobox 1a (vax1-a) of Xenopus laevis (African clawed frog).